The sequence spans 238 residues: MSEDLAKQLASYKAQLQQVEAALSGNGENEDLLKLKKDLQEVIELTKDLLSTQPSETLASSDSFASTQPTHSWKVGDKCMAVWSEDGQCYEAEIEEIDEENGTAAITFAVYGNAEVTPLLNLKPVEEGRKAKEDSGNKPMSKKEMIAQQREYKKKKALKKAQRIKELEQEREDQKVKWQQFNNRAYSKNKKGQVKRSIFASPESVTGKVGVGTCGIADKPMTQYQDTSKYNVRHLMPQ.

Positions Ser72–Lys132 constitute a Tudor domain. A Nuclear localization signal motif is present at residues Lys142–Lys160. Ser201 carries the phosphoserine modification. Lys219 carries the post-translational modification N6-acetyllysine.

It belongs to the SMN family. Associates with spliceosomes. Associates with U4/U5/U6 tri-snRNP and with U2 snRNP.

It is found in the nucleus speckle. Its subcellular location is the nucleus. The protein resides in the cajal body. Functionally, involved in spliceosome assembly. In Mus musculus (Mouse), this protein is Survival of motor neuron-related-splicing factor 30 (Smndc1).